A 173-amino-acid polypeptide reads, in one-letter code: Crossover junction endodeoxyribonuclease RuvC (173 aa).

Active-site residues include Asp8, Glu67, and Asp139. Mg(2+) contacts are provided by Asp8, Glu67, and Asp139.

It belongs to the RuvC family. In terms of assembly, homodimer which binds Holliday junction (HJ) DNA. The HJ becomes 2-fold symmetrical on binding to RuvC with unstacked arms; it has a different conformation from HJ DNA in complex with RuvA. In the full resolvosome a probable DNA-RuvA(4)-RuvB(12)-RuvC(2) complex forms which resolves the HJ. Requires Mg(2+) as cofactor.

The protein localises to the cytoplasm. It catalyses the reaction Endonucleolytic cleavage at a junction such as a reciprocal single-stranded crossover between two homologous DNA duplexes (Holliday junction).. Functionally, the RuvA-RuvB-RuvC complex processes Holliday junction (HJ) DNA during genetic recombination and DNA repair. Endonuclease that resolves HJ intermediates. Cleaves cruciform DNA by making single-stranded nicks across the HJ at symmetrical positions within the homologous arms, yielding a 5'-phosphate and a 3'-hydroxyl group; requires a central core of homology in the junction. The consensus cleavage sequence is 5'-(A/T)TT(C/G)-3'. Cleavage occurs on the 3'-side of the TT dinucleotide at the point of strand exchange. HJ branch migration catalyzed by RuvA-RuvB allows RuvC to scan DNA until it finds its consensus sequence, where it cleaves and resolves the cruciform DNA. This Salmonella paratyphi C (strain RKS4594) protein is Crossover junction endodeoxyribonuclease RuvC.